The sequence spans 190 residues: NADH-quinone oxidoreductase subunit B (190 aa).

4 residues coordinate [4Fe-4S] cluster: Cys-69, Cys-70, Cys-134, and Cys-164.

This sequence belongs to the complex I 20 kDa subunit family. As to quaternary structure, NDH-1 is composed of 14 different subunits. Subunits NuoB, C, D, E, F, and G constitute the peripheral sector of the complex. The cofactor is [4Fe-4S] cluster.

The protein resides in the cell inner membrane. It carries out the reaction a quinone + NADH + 5 H(+)(in) = a quinol + NAD(+) + 4 H(+)(out). NDH-1 shuttles electrons from NADH, via FMN and iron-sulfur (Fe-S) centers, to quinones in the respiratory chain. Couples the redox reaction to proton translocation (for every two electrons transferred, four hydrogen ions are translocated across the cytoplasmic membrane), and thus conserves the redox energy in a proton gradient. The chain is NADH-quinone oxidoreductase subunit B from Hyphomonas neptunium (strain ATCC 15444).